A 62-amino-acid chain; its full sequence is Conotoxin Pl168 (62 aa).

The first 21 residues, 1–21 (MGMRMMFTVFLLVVLATTVVS), serve as a signal peptide directing secretion. A propeptide spanning residues 22–40 (FTLDRASDGANAAADLVAR) is cleaved from the precursor. Disulfide bonds link Cys-46–Cys-52 and Cys-47–Cys-61.

This sequence belongs to the conotoxin A superfamily. In terms of processing, both Pro-53 and Pro-62 are not in cis/trans isomerization. In terms of tissue distribution, expressed by the venom duct.

It is found in the secreted. Its function is as follows. Probable neurotoxin with unknown target. Possibly targets ion channels. This is Conotoxin Pl168 from Conus planorbis (Planorbis cone).